The primary structure comprises 742 residues: Eukaryotic translation initiation factor 3 subunit B (742 aa).

Residues 1–10 (MAPSFDTLSE) are compositionally biased toward polar residues. Positions 1–20 (MAPSFDTLSEQDLHEEEEEE) are disordered. An RRM domain is found at 40–126 (TFVVIDGLPI…HTLAVNKLMD (87 aa)). WD repeat units lie at residues 193–230 (AHWT…KLKQ), 232–290 (PHPF…RSFV), 304–345 (QPKK…LLGK), 515–558 (IEKK…EKPE), and 573–611 (VEHY…HTFA).

Belongs to the eIF-3 subunit B family. As to quaternary structure, component of the eukaryotic translation initiation factor 3 (eIF-3) complex.

It is found in the cytoplasm. In terms of biological role, RNA-binding component of the eukaryotic translation initiation factor 3 (eIF-3) complex, which is involved in protein synthesis of a specialized repertoire of mRNAs and, together with other initiation factors, stimulates binding of mRNA and methionyl-tRNAi to the 40S ribosome. The eIF-3 complex specifically targets and initiates translation of a subset of mRNAs involved in cell proliferation. The protein is Eukaryotic translation initiation factor 3 subunit B (prt1) of Aspergillus terreus (strain NIH 2624 / FGSC A1156).